The primary structure comprises 191 residues: Adenine phosphoribosyltransferase (191 aa).

Belongs to the purine/pyrimidine phosphoribosyltransferase family. As to quaternary structure, homodimer.

The protein resides in the cytoplasm. The enzyme catalyses AMP + diphosphate = 5-phospho-alpha-D-ribose 1-diphosphate + adenine. The protein operates within purine metabolism; AMP biosynthesis via salvage pathway; AMP from adenine: step 1/1. Functionally, catalyzes a salvage reaction resulting in the formation of AMP, that is energically less costly than de novo synthesis. In Bordetella bronchiseptica (strain ATCC BAA-588 / NCTC 13252 / RB50) (Alcaligenes bronchisepticus), this protein is Adenine phosphoribosyltransferase.